A 261-amino-acid polypeptide reads, in one-letter code: MGVADNEYISVPTGEPVQQQPQTTSVVFGAPQSYYPHQQPQIILSAPTTTASTSTTDSTVVEENPVCCDRCDLENKVKYQRYSTVGPWLYQIIILFFSQQFLLFSIAPILGLFAMYTQNRCIVVMHFLTAAFYYIFSVIFLFSGDQINTILLSILFSIIFTLSLMNYSRYIKTLNKLANVGECLQSTINGSGFEVTIESQPTPTTIPQPIVQPQPIYVSQLPMMIPQPSSQPPQIIVPQIVYDANHNPIYHLIPIQNSNQH.

The segment at 1–22 (MGVADNEYISVPTGEPVQQQPQ) is disordered. 3 helical membrane-spanning segments follow: residues 92–112 (IIILFFSQQFLLFSIAPILGL), 122–142 (IVVMHFLTAAFYYIFSVIFLF), and 147–167 (INTILLSILFSIIFTLSLMNY).

The protein localises to the membrane. This is an uncharacterized protein from Dictyostelium discoideum (Social amoeba).